The following is a 398-amino-acid chain: MKKITILGSTGSIGINALSIIQKNPDLFKVIALVANKNFSIMLRQCELFSPDWVAMRDEKSAHILRKKLKHSKINTQVLTGEKDICALAALEETDHVISAIVGMAGLLPTLSAIHAGKTILLANKESLITSGYFFMKALSSSGAKIIPIDSEHNAIFQVLPLEIQKNLGKTTLEKNSIKHLVLTGSGGPFYKFSSSDLSNVTPDQACSHPNWLMGKKISVDSATMMNKGLEYAEARWLFNALESEIKILIHPESIIHSMVQYYDGSLLAQLSVPDIRTSISYAMSWPDRICTEVDYLNFYKINNLTFFEPDFTQFPCLKLAIDAFSQGQASMTVLNAANEIAVSSFLDSKISFTKIYEINMEILMSSCFSEPKCIQDILEIDRKVRILAKNKVSSLIF.

NADPH contacts are provided by Thr10, Gly11, Ser12, Ile13, Lys37, Asn38, and Asn124. Lys125 provides a ligand contact to 1-deoxy-D-xylulose 5-phosphate. NADPH is bound at residue Glu126. Position 150 (Asp150) interacts with Mn(2+). 1-deoxy-D-xylulose 5-phosphate is bound by residues Ser151, Glu152, Ser186, and His209. Glu152 provides a ligand contact to Mn(2+). Gly215 is a binding site for NADPH. The 1-deoxy-D-xylulose 5-phosphate site is built by Ser222, Asn227, Lys228, and Glu231. Residue Glu231 participates in Mn(2+) binding.

It belongs to the DXR family. In terms of assembly, homodimer. The cofactor is Mg(2+). Requires Mn(2+) as cofactor.

The catalysed reaction is 2-C-methyl-D-erythritol 4-phosphate + NADP(+) = 1-deoxy-D-xylulose 5-phosphate + NADPH + H(+). The protein operates within isoprenoid biosynthesis; isopentenyl diphosphate biosynthesis via DXP pathway; isopentenyl diphosphate from 1-deoxy-D-xylulose 5-phosphate: step 1/6. In terms of biological role, catalyzes the NADPH-dependent rearrangement and reduction of 1-deoxy-D-xylulose-5-phosphate (DXP) to 2-C-methyl-D-erythritol 4-phosphate (MEP). This Buchnera aphidicola subsp. Acyrthosiphon pisum (strain APS) (Acyrthosiphon pisum symbiotic bacterium) protein is 1-deoxy-D-xylulose 5-phosphate reductoisomerase.